Consider the following 247-residue polypeptide: Small ribosomal subunit protein uS2 (247 aa).

Belongs to the universal ribosomal protein uS2 family.

The chain is Small ribosomal subunit protein uS2 from Pseudomonas savastanoi pv. phaseolicola (strain 1448A / Race 6) (Pseudomonas syringae pv. phaseolicola (strain 1448A / Race 6)).